Here is a 244-residue protein sequence, read N- to C-terminus: Serine-rich single-pass membrane protein 1 (244 aa).

The helical transmembrane segment at 35–55 (CGTIGNFLLWYFVIVFVLMFF) threads the bilayer. 3 disordered regions span residues 65–112 (DKKD…LTPV), 132–191 (QSQF…LGSY), and 213–244 (HSQQ…FSKF). A compositionally biased stretch (basic and acidic residues) spans 80 to 94 (ASKETSYKWQSKDGA). Composition is skewed to polar residues over residues 97-112 (PSQT…LTPV) and 132-142 (QSQFNEVNQNQ). Over residues 161 to 176 (SWKESESEHHPSPDSI) the composition is skewed to basic and acidic residues. Over residues 231-244 (ESSISDINTKFSKF) the composition is skewed to polar residues.

The protein resides in the membrane. In Macaca fascicularis (Crab-eating macaque), this protein is Serine-rich single-pass membrane protein 1 (SSMEM1).